Reading from the N-terminus, the 357-residue chain is 3-dehydroquinate synthase (357 aa).

NAD(+) contacts are provided by residues 104-108 (GVVGD), 128-129 (TT), lysine 141, and 168-171 (FLET). Glutamate 183, histidine 243, and histidine 260 together coordinate Zn(2+).

Belongs to the sugar phosphate cyclases superfamily. Dehydroquinate synthase family. Requires Co(2+) as cofactor. Zn(2+) serves as cofactor. The cofactor is NAD(+).

It is found in the cytoplasm. The enzyme catalyses 7-phospho-2-dehydro-3-deoxy-D-arabino-heptonate = 3-dehydroquinate + phosphate. The protein operates within metabolic intermediate biosynthesis; chorismate biosynthesis; chorismate from D-erythrose 4-phosphate and phosphoenolpyruvate: step 2/7. Catalyzes the conversion of 3-deoxy-D-arabino-heptulosonate 7-phosphate (DAHP) to dehydroquinate (DHQ). This is 3-dehydroquinate synthase from Streptococcus pyogenes serotype M5 (strain Manfredo).